The following is a 206-amino-acid chain: Putative metal transport protein HI_1621 (206 aa).

The next 6 membrane-spanning stretches (helical) occupy residues 6–26 (GVLH…GIAV), 38–58 (LTAL…PVGI), 72–92 (FLGW…VIFF), 94–114 (FGGF…AVIA), 136–156 (IGAG…VLML), and 165–185 (LVWL…IISV).

The protein belongs to the CbiM family.

The protein localises to the cell membrane. In terms of biological role, may be involved in metal transport. The protein is Putative metal transport protein HI_1621 of Haemophilus influenzae (strain ATCC 51907 / DSM 11121 / KW20 / Rd).